The following is a 364-amino-acid chain: Dihydroorotate dehydrogenase (quinone) (364 aa).

FMN contacts are provided by residues A61–K65 and T85. Residue K65 participates in substrate binding. N110 to F114 provides a ligand contact to substrate. Residues N139 and N170 each contribute to the FMN site. Residue N170 participates in substrate binding. Residue S173 is the Nucleophile of the active site. A substrate-binding site is contributed by N175. The FMN site is built by K215 and S243. N244–T245 is a substrate binding site. FMN-binding positions include G266, G295, and Y316 to T317.

This sequence belongs to the dihydroorotate dehydrogenase family. Type 2 subfamily. In terms of assembly, monomer. It depends on FMN as a cofactor.

It localises to the cell membrane. It carries out the reaction (S)-dihydroorotate + a quinone = orotate + a quinol. It participates in pyrimidine metabolism; UMP biosynthesis via de novo pathway; orotate from (S)-dihydroorotate (quinone route): step 1/1. Catalyzes the conversion of dihydroorotate to orotate with quinone as electron acceptor. This chain is Dihydroorotate dehydrogenase (quinone), found in Brucella canis (strain ATCC 23365 / NCTC 10854 / RM-666).